The primary structure comprises 672 residues: GPI mannosyltransferase pigv-1 (672 aa).

The Cytoplasmic portion of the chain corresponds to 1–134 (MRRREPGRDV…TQRCLGFCFR (134 aa)). A compositionally biased stretch (basic and acidic residues) spans 82 to 94 (REESDSSSSREDS). Positions 82 to 115 (REESDSSSSREDSPLGSTETGESCSTTDDEESKE) are disordered. Residues 97-107 (GSTETGESCST) are compositionally biased toward low complexity. The helical transmembrane segment at 135–155 (QLFFSRMWVFILQFIASYYAG) threads the bilayer. Residues 156–239 (DRFRTDGFNL…NGMESVFGWT (84 aa)) are Extracellular-facing. A helical transmembrane segment spans residues 240 to 260 (FPPWVTITLAAVFVNLFCFLL). Over 261-277 (CGMTLYQVVLIMTRSVK) the chain is Cytoplasmic. Transmembrane regions (helical) follow at residues 278–298 (ISLLAVSIFAFNPASIFFSSA) and 299–319 (YSESMFFTMTLTGFVFMLFGL). At 320 to 345 (RGKGFWHRMLKGFTGTICFGLTFAVR) the chain is on the extracellular side. The helical transmembrane segment at 346–366 (SNGLLNFLYVAWIWCGTLLWD) threads the bilayer. The Cytoplasmic segment spans residues 367-423 (EEMPIPDCHKLISTLAATKNERYKQEWQAKFWRFQQKRKQNRKVFRWTDPNFSRCVT). The chain crosses the membrane as a helical span at residues 424 to 444 (LFIVIVCAISATLLFFTPYVF). Topologically, residues 445–520 (MTNFTADEFC…WSVKFFGYWK (76 aa)) are extracellular. A helical membrane pass occupies residues 521 to 541 (IKKIPCFLMMLPAAILTVLAI). The Cytoplasmic segment spans residues 542–569 (KSSWNDVFLNKRWNNIWVLTARSDHSLP). A helical membrane pass occupies residues 570-590 (MAIHSSVLLFVAIFYINSEVF). Residues 591-592 (TR) are Extracellular-facing. A helical membrane pass occupies residues 593-613 (IIFSSSPFIYIYIATYIDKLT). Residues 614-648 (QGTIAGNRLWQYFESPGILPFFVFRRVWQDGWRGK) are Cytoplasmic-facing. Residues 649-669 (LLYIYILGYFVFGTMAHSAWL) traverse the membrane as a helical segment. The Extracellular segment spans residues 670-672 (PFT).

The protein belongs to the PIGV family. As to expression, expressed in epithelial tissues including the epidermis, pharynx, intestine, rectum and excretory cell during embryogenesis.

It is found in the endoplasmic reticulum membrane. Its pathway is glycolipid biosynthesis; glycosylphosphatidylinositol-anchor biosynthesis. In terms of biological role, alpha-1,6-mannosyltransferase involved in glycosylphosphatidylinositol-anchor biosynthesis. Transfers the second mannose to the glycosylphosphatidylinositol during GPI precursor assembly. Required for maintenance of epithelial integrity during embryogenesis. This chain is GPI mannosyltransferase pigv-1, found in Caenorhabditis elegans.